Consider the following 520-residue polypeptide: GMP synthase [glutamine-hydrolyzing] (520 aa).

Positions 12–202 constitute a Glutamine amidotransferase type-1 domain; sequence KIIVLDFGSQ…AFDVCGCTGD (191 aa). The active-site Nucleophile is Cys89. Catalysis depends on residues His176 and Glu178. Residues 203-395 enclose the GMPS ATP-PPase domain; the sequence is WSMENFIDME…LGMPDAIVWR (193 aa). 230–236 is an ATP binding site; it reads SGGVDSS.

As to quaternary structure, homodimer.

The catalysed reaction is XMP + L-glutamine + ATP + H2O = GMP + L-glutamate + AMP + diphosphate + 2 H(+). It functions in the pathway purine metabolism; GMP biosynthesis; GMP from XMP (L-Gln route): step 1/1. Catalyzes the synthesis of GMP from XMP. The chain is GMP synthase [glutamine-hydrolyzing] from Enterococcus faecalis (strain ATCC 700802 / V583).